Here is a 239-residue protein sequence, read N- to C-terminus: Ribonuclease 3 (239 aa).

The 126-residue stretch at 12-137 (RLTLEAAIGH…LIAALYLDGG (126 aa)) folds into the RNase III domain. Residue E50 coordinates Mg(2+). The active site involves D54. Mg(2+)-binding residues include D123 and E126. The active site involves E126. The DRBM domain maps to 162–231 (DAKTELQEWA…ATRILEREGI (70 aa)).

It belongs to the ribonuclease III family. Homodimer. Mg(2+) is required as a cofactor.

It is found in the cytoplasm. It carries out the reaction Endonucleolytic cleavage to 5'-phosphomonoester.. Functionally, digests double-stranded RNA. Involved in the processing of primary rRNA transcript to yield the immediate precursors to the large and small rRNAs (23S and 16S). Processes some mRNAs, and tRNAs when they are encoded in the rRNA operon. Processes pre-crRNA and tracrRNA of type II CRISPR loci if present in the organism. This is Ribonuclease 3 from Rhizobium rhizogenes (strain K84 / ATCC BAA-868) (Agrobacterium radiobacter).